The sequence spans 303 residues: Albumin b-32 (303 aa).

Residues 112–137 are compositionally biased toward low complexity; it reads ATPTSSATTPGGSASAAGTRTSSATR. Positions 112-175 are disordered; sequence ATPTSSATTP…GGGGADADAD (64 aa). The span at 146–156 shows a compositional bias: basic and acidic residues; the sequence is ARDDQGRQRPG.

This sequence belongs to the ribosome-inactivating protein family. Type 1 RIP subfamily. In terms of assembly, monomer. Endosperm.

The protein localises to the cytoplasm. It catalyses the reaction Endohydrolysis of the N-glycosidic bond at one specific adenosine on the 28S rRNA.. In terms of biological role, a possible regulatory factor for the synthesis of zeins, the major group of storage proteins. This Zea mays (Maize) protein is Albumin b-32 (O6).